A 123-amino-acid polypeptide reads, in one-letter code: Antitoxin RnlB (123 aa).

As to quaternary structure, can form a complex with cognate toxin RnlA. In terms of processing, probably degraded by CplXP and Lon proteases.

Functionally, antitoxin component of a type II toxin-antitoxin (TA) system. A labile antitoxin (half-life of 2.1 minutes) that inhibits the endonuclease activity of cognate toxin RnlA but not that of non-cognate toxin LsoA. In Escherichia coli (strain K12), this protein is Antitoxin RnlB (rnlB).